Here is a 522-residue protein sequence, read N- to C-terminus: Exo-alpha-(1-&gt;6)-L-arabinofuranosidase (522 aa).

Residues Glu-39, Asn-84, and Asn-185 each contribute to the alpha-L-arabinofuranose site. Residue Glu-186 is the Proton donor/acceptor of the active site. The alpha-L-arabinofuranose site is built by Tyr-257, Glu-310, and Gln-370. The Nucleophile role is filled by Glu-310.

This sequence belongs to the glycosyl hydrolase 51 family. As to quaternary structure, homohexamer; trimer of dimers.

It catalyses the reaction Hydrolysis of terminal non-reducing alpha-L-arabinofuranoside residues in alpha-L-arabinosides.. The enzyme catalyses (20S)-ginsenoside Rc + H2O = L-arabinofuranose + (20S)-ginsenoside Rd. With respect to regulation, completely inhibited by Cu(2+) and partially inhibited by Co(2+) and Ba(2+). In terms of biological role, catalyzes the hydrolysis of p-nitrophenyl-alpha-L-arabinofuranoside (pNP-alphaL-Af) and the hydrolysis of the terminal alpha-L-arabinofuranoside at the C20 position of ginsenoside Rc to produce ginsenoside Rd. Cannot hydrolyze p-nitrophenyl-alpha-L-arabinopyranoside (pNP-alphaL-Ap) and ginsenoside Rb2. In Bifidobacterium longum, this protein is Exo-alpha-(1-&gt;6)-L-arabinofuranosidase.